The chain runs to 740 residues: ATP-dependent RNA helicase DDX1 (740 aa).

The interval 1–448 (MAAFSEMGVM…ETVHHVVVPV (448 aa)) is interaction with dsRNA. One can recognise a Helicase ATP-binding domain in the interval 2 to 428 (AAFSEMGVMP…SEKIMHFPTW (427 aa)). 46–53 (AETGSGKT) serves as a coordination point for ATP. The 178-residue stretch at 70-247 (DQQEGKKGKA…LKFNFGEEDF (178 aa)) folds into the B30.2/SPRY domain. Residues 370–373 (DEAD) carry the DEAD box motif. Residues 493–681 (KGEYIVRAIK…QVEPDIKVPL (189 aa)) enclose the Helicase C-terminal domain.

It belongs to the DEAD box helicase family. DDX1 subfamily.

Its subcellular location is the nucleus. The protein localises to the cytoplasm. The protein resides in the cytoplasmic granule. It localises to the cytosol. It is found in the mitochondrion. It catalyses the reaction ATP + H2O = ADP + phosphate + H(+). Its function is as follows. Acts as an ATP-dependent RNA helicase, able to unwind both RNA-RNA and RNA-DNA duplexes. Possesses 5' single-stranded RNA overhang nuclease activity. Acts as a positive regulator of transcription. May be involved in 3'-end cleavage and polyadenylation of pre-mRNAs. Binds DNA and RNA. Component of the tRNA-splicing ligase complex required to facilitate the enzymatic turnover of catalytic subunit rtcb. Binds (via helicase ATP-binding domain) on both short and long poly(I:C) dsRNA. This chain is ATP-dependent RNA helicase DDX1 (ddx1), found in Xenopus laevis (African clawed frog).